The primary structure comprises 524 residues: MAAMAVALRGLGGRFRWRTQAVAGGVRGAARGAAAGQRDYDLLVVGGGSGGLACAKEAAQLGRKVAVVDYVEPSPQGTRWGLGGTCVNVGCIPKKLMHQAALLGGLIQDAPNYGWEVAQPVPHDWRKMAEAVQNHVKSLNWGHRVQLQDRKVKYFNIKASFVDEHTVCGVAKGGKEILLSADHIIIATGGRPRYPTHIEGALEYGITSDDIFWLKESPGKTLVVGASYVALECAGFLTGIGLDTTIMMRSIPLRGFDQQMSSMVIEHMASHGTRFLRGCAPSRVRRLPDGQLQVTWEDSTTGKEDTGTFDTVLWAIGRVPDTRSLNLEKAGVDTSPDTQKILVDSREATSVPHIYAIGDVVEGRPELTPIAIMAGRLLVQRLFGGSSDLMDYDNVPTTVFTPLEYGCVGLSEEEAVARHGQEHVEVYHAHYKPLEFTVAGRDASQCYVKMVCLREPPQLVLGLHFLGPNAGEVTQGFALGIKCGASYAQVMRTVGIHPTCSEEVVKLRISKRSGLDPTVTGCUG.

The N-terminal 36 residues, 1 to 36 (MAAMAVALRGLGGRFRWRTQAVAGGVRGAARGAAAG), are a transit peptide targeting the mitochondrion. 41–70 (DLLVVGGGSGGLACAKEAAQLGRKVAVVDY) contacts FAD. Residues cysteine 86 and cysteine 91 are joined by a disulfide bond. Residues lysine 175 and lysine 329 each carry the N6-succinyllysine modification. Histidine 497 functions as the Proton acceptor in the catalytic mechanism. Positions 522–523 (CU) form a cross-link, cysteinyl-selenocysteine (Cys-Sec). Selenocysteine 523 is a non-standard amino acid (selenocysteine).

Belongs to the class-I pyridine nucleotide-disulfide oxidoreductase family. Homodimer. It depends on FAD as a cofactor. As to expression, highly expressed in the prostate, ovary, liver, testis, uterus, colon and small intestine. Intermediate levels in brain, skeletal muscle, heart and spleen. Low levels in placenta, pancreas, thymus and peripheral blood leukocytes. According to PubMed:10608886, high levels in kidney, whereas according to PubMed:9923614, levels are low. High expression is observed in the adrenal cortex.

The protein localises to the mitochondrion. It catalyses the reaction [thioredoxin]-dithiol + NADP(+) = [thioredoxin]-disulfide + NADPH + H(+). Involved in the control of reactive oxygen species levels and the regulation of mitochondrial redox homeostasis. Maintains thioredoxin in a reduced state. May play a role in redox-regulated cell signaling. This Homo sapiens (Human) protein is Thioredoxin reductase 2, mitochondrial.